A 352-amino-acid polypeptide reads, in one-letter code: MFDLNQSLFLRALRRQPVERTPIWIMRQAGRYLPEYRKVREHAGDFLNLCKNPELACEVTLQPLRRYALDAAILFSDILTIPDAMGLGLYFAEGEGPCFTNPLQDTKAIHALKIPSIPESLSYVFDAARLIRQEMPKELPLIGFSGSPWTLACYMVEGGSSRDFKRILNLIYTEKEAAHLLLNKLAVSVTAYLTEQIKAGVNAVMIFDTWGGVLTPQNYKDFSLAYMHQIVQQLKNEYPDIPVILFTKNGGQWLEWMAETGCDALGVDWTCDLASARKRVGGKVALQGNLDPAVLLTAKNCIRREVGSVLASYGYGTGHIFNLGHGITPDVPPENVAIMIEAVHEISPQYHL.

Substrate contacts are provided by residues 27–31, aspartate 77, tyrosine 154, threonine 209, and histidine 325; that span reads RQAGR.

Belongs to the uroporphyrinogen decarboxylase family. Homodimer.

It is found in the cytoplasm. The enzyme catalyses uroporphyrinogen III + 4 H(+) = coproporphyrinogen III + 4 CO2. It functions in the pathway porphyrin-containing compound metabolism; protoporphyrin-IX biosynthesis; coproporphyrinogen-III from 5-aminolevulinate: step 4/4. Catalyzes the decarboxylation of four acetate groups of uroporphyrinogen-III to yield coproporphyrinogen-III. The chain is Uroporphyrinogen decarboxylase from Legionella pneumophila (strain Paris).